The primary structure comprises 425 residues: CinA-like protein (425 aa).

Belongs to the CinA family.

In Mycobacterium marinum (strain ATCC BAA-535 / M), this protein is CinA-like protein.